We begin with the raw amino-acid sequence, 471 residues long: Membrane-associated sulfotransferase kil1 (471 aa).

Topologically, residues 1 to 12 are cytoplasmic; the sequence is MSTTSMILTKKN. A helical; Signal-anchor for type II membrane protein membrane pass occupies residues 13 to 33; it reads IIILSIIIITIIAYQFYITSP. Over 34–471 the chain is Lumenal; it reads QSFPSSNTIT…LLNRDFKWQN (438 aa). N-linked (GlcNAc...) asparagine glycosylation occurs at Asn47. 2 stretches are compositionally biased toward low complexity: residues 89–105 and 112–127; these read NQNENQNQINNEYNNNK and NNNNNNYNNNNNNNNN. Residues 89-127 form a disordered region; that stretch reads NQNENQNQINNEYNNNKLNDEQENNNNNNYNNNNNNNNN. Residues 167–172, Arg252, and Ser260 contribute to the 3'-phosphoadenylyl sulfate site; that span reads KSGTTF. 2 N-linked (GlcNAc...) asparagine glycosylation sites follow: Asn324 and Asn344. Position 348 (Tyr348) interacts with 3'-phosphoadenylyl sulfate.

It belongs to the sulfotransferase 1 family.

The protein resides in the membrane. In terms of biological role, sulfotransferase involved in intracellular killing of bacteria. The sequence is that of Membrane-associated sulfotransferase kil1 (kil1) from Dictyostelium discoideum (Social amoeba).